The primary structure comprises 410 residues: Protein translocase subunit SecY 2 (410 aa).

10 helical membrane-spanning segments follow: residues 2-22 (ILII…SAAL), 45-65 (FSIM…VQLL), 94-114 (LTLV…NTLT), 125-145 (FTII…MWLG), 147-167 (LITE…GILV), 188-208 (WIRF…IVWF), 241-261 (VIPV…LMFF), 284-304 (GVII…IVQI), 339-359 (YLSL…LLVA), and 366-386 (LQIG…IEIG).

Belongs to the SecY/SEC61-alpha family. Component of the Sec protein translocase complex. Heterotrimer consisting of SecY, SecE and SecG subunits. The heterotrimers can form oligomers, although 1 heterotrimer is thought to be able to translocate proteins. Interacts with the ribosome. Interacts with SecDF, and other proteins may be involved. Interacts with SecA.

It is found in the cell membrane. In terms of biological role, the central subunit of the protein translocation channel SecYEG. Consists of two halves formed by TMs 1-5 and 6-10. These two domains form a lateral gate at the front which open onto the bilayer between TMs 2 and 7, and are clamped together by SecE at the back. The channel is closed by both a pore ring composed of hydrophobic SecY resides and a short helix (helix 2A) on the extracellular side of the membrane which forms a plug. The plug probably moves laterally to allow the channel to open. The ring and the pore may move independently. This is Protein translocase subunit SecY 2 from Lactobacillus kefiranofaciens subsp. kefiranofaciens.